Here is a 271-residue protein sequence, read N- to C-terminus: 5'-AMP-activated protein kinase subunit beta-2 (271 aa).

The disordered stretch occupies residues 1-46 (MGNTTSERVSGERHGAKAARAEGGGHGPGKEHKIMVGSTDDPSVFS). S38 carries the post-translational modification Phosphoserine; by ULK1. Residue T39 is modified to Phosphothreonine; by ULK1. S68 bears the Phosphoserine; by ULK1 mark. 2 positions are modified to phosphoserine: S94 and S107. At T147 the chain carries Phosphothreonine. A phosphoserine mark is found at S157, S169, S173, and S183.

The protein belongs to the 5'-AMP-activated protein kinase beta subunit family. In terms of assembly, AMPK is a heterotrimer of an alpha catalytic subunit (PRKAA1 or PRKAA2), a beta (PRKAB1 or PRKAB2) and a gamma non-catalytic subunits (PRKAG1, PRKAG2 or PRKAG3). In terms of processing, phosphorylated when associated with the catalytic subunit (PRKAA1 or PRKAA2). Phosphorylated by ULK1 and ULK2; leading to negatively regulate AMPK activity and suggesting the existence of a regulatory feedback loop between ULK1, ULK2 and AMPK.

In terms of biological role, non-catalytic subunit of AMP-activated protein kinase (AMPK), an energy sensor protein kinase that plays a key role in regulating cellular energy metabolism. In response to reduction of intracellular ATP levels, AMPK activates energy-producing pathways and inhibits energy-consuming processes: inhibits protein, carbohydrate and lipid biosynthesis, as well as cell growth and proliferation. AMPK acts via direct phosphorylation of metabolic enzymes, and by longer-term effects via phosphorylation of transcription regulators. Also acts as a regulator of cellular polarity by remodeling the actin cytoskeleton; probably by indirectly activating myosin. Beta non-catalytic subunit acts as a scaffold on which the AMPK complex assembles, via its C-terminus that bridges alpha (PRKAA1 or PRKAA2) and gamma subunits (PRKAG1, PRKAG2 or PRKAG3). The polypeptide is 5'-AMP-activated protein kinase subunit beta-2 (Prkab2) (Mus musculus (Mouse)).